The following is a 351-amino-acid chain: Ca(2+)/H(+) antiporter ChaA (351 aa).

The next 11 helical transmembrane spans lie at 4 to 24 (IFFI…LMHW), 25 to 45 (PSAV…SYMG), 59 to 79 (IGGL…SLFA), 86 to 106 (GIVL…VAGL), 130 to 150 (GLLI…SVGM), 156 to 176 (LNLS…ALYF), 205 to 225 (VATI…ENLV), 241 to 261 (FIGV…SAII), 282 to 302 (IAMF…TSMP), 303 to 323 (LVFT…MIAI), and 331 to 351 (WFEG…FFLL).

It belongs to the Ca(2+):cation antiporter (CaCA) (TC 2.A.19) family. Cation/proton exchanger (CAX) subfamily. In terms of assembly, homotrimer.

It localises to the cell membrane. Calcium efflux is tightly regulated by intracellular pH. Its function is as follows. Ca(+)/H(+) antiporter that extrudes calcium in exchange for external protons. Does not transport sodium or potassium. This Bacillus subtilis (strain 168) protein is Ca(2+)/H(+) antiporter ChaA (chaA).